Reading from the N-terminus, the 389-residue chain is GDP-fucose protein O-fucosyltransferase 1 (389 aa).

An N-terminal signal peptide occupies residues 1 to 21 (MRVSKVLTLASFISVCSYSEA). The N-linked (GlcNAc...) asparagine glycan is linked to asparagine 24. The cysteines at positions 35 and 37 are disulfide-linked. 40 to 43 (RFGN) contributes to the substrate binding site. Cysteine 119 and cysteine 135 form a disulfide bridge. 238–240 (HLR) contacts substrate. Disulfide bonds link cysteine 249–cysteine 281 and cysteine 266–cysteine 353. Substrate is bound at residue 356–357 (TF).

This sequence belongs to the glycosyltransferase 65 family. As to quaternary structure, monomer.

The protein localises to the endoplasmic reticulum. The catalysed reaction is L-seryl-[protein] + GDP-beta-L-fucose = 3-O-(alpha-L-fucosyl)-L-seryl-[protein] + GDP + H(+). It catalyses the reaction L-threonyl-[protein] + GDP-beta-L-fucose = 3-O-(alpha-L-fucosyl)-L-threonyl-[protein] + GDP + H(+). It functions in the pathway protein modification; protein glycosylation. In terms of biological role, catalyzes the reaction that attaches fucose through an O-glycosidic linkage to a conserved serine or threonine residue found in the consensus sequence C2-X(4,5)-[S/T]-C3 of EGF domains, where C2 and C3 are the second and third conserved cysteines. Specifically uses GDP-fucose as donor substrate and proper disulfide pairing of the substrate EGF domains is required for fucose transfer. This is GDP-fucose protein O-fucosyltransferase 1 from Caenorhabditis elegans.